A 186-amino-acid chain; its full sequence is Testis-expressed protein 36 (186 aa).

Residues 1–52 (MTKGRRFNPPSDKDGRWFPHIGLTQKTPESITSATSKEPQSPHLPRQAEGKL) form a disordered region. Polar residues predominate over residues 24-39 (TQKTPESITSATSKEP).

The polypeptide is Testis-expressed protein 36 (TEX36) (Homo sapiens (Human)).